The sequence spans 526 residues: Peptide chain release factor 3 (526 aa).

The 270-residue stretch at 8–277 folds into the tr-type G domain; the sequence is NKRRTFAIIS…GLTEWAPKPQ (270 aa). Residues 17-24, 85-89, and 139-142 each bind GTP; these read SHPDAGKT, DTPGH, and NKLD.

It belongs to the TRAFAC class translation factor GTPase superfamily. Classic translation factor GTPase family. PrfC subfamily.

Its subcellular location is the cytoplasm. Its function is as follows. Increases the formation of ribosomal termination complexes and stimulates activities of RF-1 and RF-2. It binds guanine nucleotides and has strong preference for UGA stop codons. It may interact directly with the ribosome. The stimulation of RF-1 and RF-2 is significantly reduced by GTP and GDP, but not by GMP. This Actinobacillus pleuropneumoniae serotype 3 (strain JL03) protein is Peptide chain release factor 3.